The sequence spans 332 residues: L-lactate dehydrogenase A chain (332 aa).

The residue at position 2 (A2) is an N-acetylalanine. K5 carries the post-translational modification N6-acetyllysine; alternate. Residue K5 is modified to N6-succinyllysine; alternate. An N6-acetyllysine modification is found at K14. Position 18 is a phosphothreonine (T18). 29 to 57 (GAVGMACAISILMKDLADELALVDVIEDK) serves as a coordination point for NAD(+). K57 carries the N6-acetyllysine; alternate modification. K57 is covalently cross-linked (Glycyl lysine isopeptide (Lys-Gly) (interchain with G-Cter in SUMO2); alternate). K81 carries the post-translational modification N6-acetyllysine. Position 99 (R99) interacts with NAD(+). R106 lines the substrate pocket. K118 is modified (N6-acetyllysine; alternate). The residue at position 118 (K118) is an N6-succinyllysine; alternate. Residue K126 is modified to N6-acetyllysine. N138 contacts NAD(+). Substrate contacts are provided by N138 and R169. Residue H193 is the Proton acceptor of the active site. K224 and K232 each carry N6-acetyllysine. Y239 is subject to Phosphotyrosine. An N6-acetyllysine modification is found at K243. T248 contacts substrate. The residue at position 309 (T309) is a Phosphothreonine. At K318 the chain carries N6-acetyllysine; alternate. An N6-succinyllysine; alternate modification is found at K318. At T322 the chain carries Phosphothreonine.

The protein belongs to the LDH/MDH superfamily. LDH family. In terms of assembly, homotetramer. Interacts with PTEN upstream reading frame protein MP31. Post-translationally, ISGylated.

It is found in the cytoplasm. It catalyses the reaction (S)-lactate + NAD(+) = pyruvate + NADH + H(+). Its pathway is fermentation; pyruvate fermentation to lactate; (S)-lactate from pyruvate: step 1/1. Its function is as follows. Interconverts simultaneously and stereospecifically pyruvate and lactate with concomitant interconversion of NADH and NAD(+). This chain is L-lactate dehydrogenase A chain (LDHA), found in Macaca fascicularis (Crab-eating macaque).